A 654-amino-acid polypeptide reads, in one-letter code: DNA ligase (654 aa).

NAD(+) contacts are provided by residues Asp31 to Asp35, Ser80 to Leu81, and Glu109. Residue Lys111 is the N6-AMP-lysine intermediate of the active site. 4 residues coordinate NAD(+): Arg132, Glu166, Lys280, and Lys304. Residues Cys398, Cys401, Cys416, and Cys421 each coordinate Zn(2+). One can recognise a BRCT domain in the interval Asn579 to Leu654.

Belongs to the NAD-dependent DNA ligase family. LigA subfamily. Mg(2+) is required as a cofactor. It depends on Mn(2+) as a cofactor.

It catalyses the reaction NAD(+) + (deoxyribonucleotide)n-3'-hydroxyl + 5'-phospho-(deoxyribonucleotide)m = (deoxyribonucleotide)n+m + AMP + beta-nicotinamide D-nucleotide.. Its function is as follows. DNA ligase that catalyzes the formation of phosphodiester linkages between 5'-phosphoryl and 3'-hydroxyl groups in double-stranded DNA using NAD as a coenzyme and as the energy source for the reaction. It is essential for DNA replication and repair of damaged DNA. In Lactococcus lactis subsp. lactis (strain IL1403) (Streptococcus lactis), this protein is DNA ligase.